Consider the following 239-residue polypeptide: tRNA (guanine-N(7)-)-methyltransferase (239 aa).

S-adenosyl-L-methionine is bound by residues Glu69, Glu94, Asp121, and Asp144. Asp144 is an active-site residue. Lys148 lines the substrate pocket. The interval 150-155 (RHNKRR) is interaction with RNA. Substrate is bound by residues Asp180 and 217 to 220 (TKFE).

This sequence belongs to the class I-like SAM-binding methyltransferase superfamily. TrmB family. Monomer.

It catalyses the reaction guanosine(46) in tRNA + S-adenosyl-L-methionine = N(7)-methylguanosine(46) in tRNA + S-adenosyl-L-homocysteine. The protein operates within tRNA modification; N(7)-methylguanine-tRNA biosynthesis. Its function is as follows. Catalyzes the formation of N(7)-methylguanine at position 46 (m7G46) in tRNA. The chain is tRNA (guanine-N(7)-)-methyltransferase from Salmonella paratyphi A (strain ATCC 9150 / SARB42).